A 505-amino-acid chain; its full sequence is Mannosyl-oligosaccharide alpha-1,2-mannosidase 1B (505 aa).

The first 16 residues, 1–16 (MRTLLALAALAGFAAA), serve as a signal peptide directing secretion. N-linked (GlcNAc...) asparagine glycans are attached at residues Asn88 and Asn174. A disulfide bond links Cys325 and Cys354. Asn359 carries N-linked (GlcNAc...) asparagine glycosylation. Residue Glu368 is the Proton donor of the active site. Thr494 provides a ligand contact to Ca(2+).

The protein belongs to the glycosyl hydrolase 47 family. As to quaternary structure, monomer. Ca(2+) is required as a cofactor. It depends on Mg(2+) as a cofactor.

Its subcellular location is the cytoplasmic vesicle lumen. The catalysed reaction is N(4)-(alpha-D-Man-(1-&gt;2)-alpha-D-Man-(1-&gt;2)-alpha-D-Man-(1-&gt;3)-[alpha-D-Man-(1-&gt;2)-alpha-D-Man-(1-&gt;3)-[alpha-D-Man-(1-&gt;2)-alpha-D-Man-(1-&gt;6)]-alpha-D-Man-(1-&gt;6)]-beta-D-Man-(1-&gt;4)-beta-D-GlcNAc-(1-&gt;4)-beta-D-GlcNAc)-L-asparaginyl-[protein] (N-glucan mannose isomer 9A1,2,3B1,2,3) + 4 H2O = N(4)-(alpha-D-Man-(1-&gt;3)-[alpha-D-Man-(1-&gt;3)-[alpha-D-Man-(1-&gt;6)]-alpha-D-Man-(1-&gt;6)]-beta-D-Man-(1-&gt;4)-beta-D-GlcNAc-(1-&gt;4)-beta-D-GlcNAc)-L-asparaginyl-[protein] (N-glucan mannose isomer 5A1,2) + 4 beta-D-mannose. It carries out the reaction N(4)-(alpha-D-Man-(1-&gt;2)-alpha-D-Man-(1-&gt;2)-alpha-D-Man-(1-&gt;3)-[alpha-D-Man-(1-&gt;3)-[alpha-D-Man-(1-&gt;2)-alpha-D-Man-(1-&gt;6)]-alpha-D-Man-(1-&gt;6)]-beta-D-Man-(1-&gt;4)-beta-D-GlcNAc-(1-&gt;4)-beta-D-GlcNAc)-L-asparaginyl-[protein] (N-glucan mannose isomer 8A1,2,3B1,3) + 3 H2O = N(4)-(alpha-D-Man-(1-&gt;3)-[alpha-D-Man-(1-&gt;3)-[alpha-D-Man-(1-&gt;6)]-alpha-D-Man-(1-&gt;6)]-beta-D-Man-(1-&gt;4)-beta-D-GlcNAc-(1-&gt;4)-beta-D-GlcNAc)-L-asparaginyl-[protein] (N-glucan mannose isomer 5A1,2) + 3 beta-D-mannose. Its pathway is protein modification; protein glycosylation. Involved in the maturation of Asn-linked oligosaccharides. Progressively trims alpha-1,2-linked mannose residues from Man(9)GlcNAc(2) to produce Man(5)GlcNAc(2). This chain is Mannosyl-oligosaccharide alpha-1,2-mannosidase 1B (mns1B), found in Emericella nidulans (strain FGSC A4 / ATCC 38163 / CBS 112.46 / NRRL 194 / M139) (Aspergillus nidulans).